The chain runs to 196 residues: Large ribosomal subunit protein bL25 (196 aa).

The protein belongs to the bacterial ribosomal protein bL25 family. CTC subfamily. As to quaternary structure, part of the 50S ribosomal subunit; part of the 5S rRNA/L5/L18/L25 subcomplex. Contacts the 5S rRNA. Binds to the 5S rRNA independently of L5 and L18.

Functionally, this is one of the proteins that binds to the 5S RNA in the ribosome where it forms part of the central protuberance. This chain is Large ribosomal subunit protein bL25, found in Geotalea daltonii (strain DSM 22248 / JCM 15807 / FRC-32) (Geobacter daltonii).